Here is a 300-residue protein sequence, read N- to C-terminus: Lysenin-related protein 2 (300 aa).

The segment at 12–35 is N-terminal cap domain; it reads EQIEVDVVAVWKEGYVYENRGSTS. Positions 36–109 are beta-hairpin domain; the sequence is VEQKIKITKG…SKEIEHTITI (74 aa). The interval 110–158 is N-terminal cap domain; the sequence is PPTSKFTRWQLNADVGGADIEYMYLIDEVTPIGGTLSIPQVIKSRAKIL. The interval 159 to 299 is C-terminal receptor-binding domain; sequence VGREIYLGET…EDKWILEVVK (141 aa). 4 residues coordinate an N-(acyl)-sphingosylphosphocholine: K187, S229, Y235, and Y284. C274 and C285 are oxidised to a cystine.

Belongs to the lysenin family. Binds to sphingomyelin as a monomer by using its C-terminal domain. Forms a nonamer when sphingomyelin/LRP-2 ratio is lower than ca 500. Oligomerization, but not binding, is influenced by the fluidity of sphingomyelin. Expressed by coelomocytes.

Its subcellular location is the secreted. The protein localises to the target cell membrane. Its function is as follows. Pore-forming toxin that specifically binds sphingomyelin in the plasma membrane of various cells. Has hemolytic activity. It also has antibacterial activities against B.megaterium. The protein is Lysenin-related protein 2 of Eisenia fetida (Red wiggler worm).